The following is a 177-amino-acid chain: O-acetyl-ADP-ribose deacetylase (177 aa).

In terms of domain architecture, Macro spans 1–175 (MKTRIHVVQG…LYERLLTQQG (175 aa)). Substrate-binding positions include 11–12 (DI), N25, 33–35 (GVD), and 122–126 (STGVY). The active-site Proton acceptor is D35.

It belongs to the MacroD-type family. YmdB subfamily. As to quaternary structure, homodimer. Interacts with RNase III.

The enzyme catalyses 3''-O-acetyl-ADP-D-ribose + H2O = ADP-D-ribose + acetate + H(+). It catalyses the reaction 2''-O-acetyl-ADP-D-ribose + H2O = ADP-D-ribose + acetate + H(+). Functionally, deacetylates O-acetyl-ADP ribose to yield ADP-ribose and free acetate. Down-regulates ribonuclease 3 (RNase III) activity. Acts by interacting directly with the region of the ribonuclease that is required for dimerization/activation. This is O-acetyl-ADP-ribose deacetylase from Escherichia coli O157:H7.